A 209-amino-acid chain; its full sequence is Uracil phosphoribosyltransferase (209 aa).

Residues Arg79, Arg104, and 131-139 (DPMLATGGS) contribute to the 5-phospho-alpha-D-ribose 1-diphosphate site. Uracil-binding positions include Ile194 and 199–201 (GDA). Position 200 (Asp200) interacts with 5-phospho-alpha-D-ribose 1-diphosphate.

It belongs to the UPRTase family. Mg(2+) serves as cofactor.

The catalysed reaction is UMP + diphosphate = 5-phospho-alpha-D-ribose 1-diphosphate + uracil. It functions in the pathway pyrimidine metabolism; UMP biosynthesis via salvage pathway; UMP from uracil: step 1/1. With respect to regulation, allosterically activated by GTP. Catalyzes the conversion of uracil and 5-phospho-alpha-D-ribose 1-diphosphate (PRPP) to UMP and diphosphate. This is Uracil phosphoribosyltransferase from Lysinibacillus sphaericus (strain C3-41).